We begin with the raw amino-acid sequence, 76 residues long: Alpha/kappa-conotoxin pl14a (76 aa).

A signal peptide spans 1–24; sequence MPSVRSVTCCCLLWMMFSVQLVTP. Residues 25 to 39 constitute a propeptide that is removed on maturation; that stretch reads GSPGTAQLSGHRTAR. 2 disulfides stabilise this stretch: Cys46–Cys61 and Cys50–Cys63. An Arginine amide modification is found at Arg64. Positions 65–76 are excised as a propeptide; that stretch reads GKRDAVSSSMAV.

Belongs to the conotoxin J superfamily. As to expression, expressed by the venom duct.

The protein resides in the secreted. Highly inhibits both nicotinic acetylcholine receptors (neuronal (IC(50)=8.7 uM for alpha-3/beta-4) and muscular (IC(50)=0.54 uM for alpha-1-beta-1-epsilon-delta (CHRNA1-CHRNB1-CHRND-CHRNE)) subtypes) and the voltage-gated potassium channel Kv1.6/KCNA6 subtype (IC(50)=1.59 uM). The sequence is that of Alpha/kappa-conotoxin pl14a from Conus planorbis (Planorbis cone).